The primary structure comprises 506 residues: Sodium-coupled neutral amino acid symporter 2 (506 aa).

Residues 1-23 are disordered; sequence MKKAEMGRFNISPDEDSSSYSSN. Topologically, residues 1–76 are cytoplasmic; sequence MKKAEMGRFN…HPGTTSFGMS (76 aa). Residues 1–96 are regulates protein turnover upon amino acid deprivation; it reads MKKAEMGRFN…SGILGLSYAM (96 aa). Phosphoserine occurs at positions 12, 21, 22, and 55. Residues 77 to 96 traverse the membrane as a helical segment; it reads VFNLSNAIVGSGILGLSYAM. Position 82 (N82) interacts with Na(+). Residues 97 to 102 are Extracellular-facing; it reads ANTGIA. Residues 103–123 traverse the membrane as a helical segment; sequence LFIILLTFVSIFSLYSVHLLL. Residues 124–158 lie on the Cytoplasmic side of the membrane; the sequence is KTANEGGSLLYEQLGYKAFGLVGKLAASGSITMQN. Residues 159–177 traverse the membrane as a helical segment; that stretch reads IGAMSSYLFIVKYELPLVI. Residues 178-188 are Extracellular-facing; sequence QALTNIEDKTG. The helical transmembrane segment at 189–209 threads the bilayer; sequence LWYLNGNYLVLLVSLVVILPL. At 210-217 the chain is on the cytoplasmic side; the sequence is SLFRNLGY. Residues 218-238 form a helical membrane-spanning segment; it reads LGYTSGLSLLCMVFFLIVVIC. At 239-292 the chain is on the extracellular side; the sequence is KKFQVPCPVEAALIINETINTTLTQPTALVPALSHNVTENDSCRPHYFIFNSQT. A disulfide bridge connects residues C245 and C281. Residues N258 and N274 are each glycosylated (N-linked (GlcNAc...) asparagine). A helical transmembrane segment spans residues 293 to 313; it reads VYAVPILIFSFVCHPAVLPIY. At 314–329 the chain is on the cytoplasmic side; that stretch reads EELKDRSRRRMMNVSK. A helical membrane pass occupies residues 330–350; sequence ISFFAMFLMYLLAALFGYLTF. The Extracellular portion of the chain corresponds to 351–371; that stretch reads YEHVESELLHTYSSILGTDIL. Residues 372–392 traverse the membrane as a helical segment; the sequence is LLIVRLAVLMAVTLTVPVVIF. Na(+) is bound at residue T386. Residues 393–413 are Cytoplasmic-facing; it reads PIRSSVTHLLCASKDFSWWRH. A helical membrane pass occupies residues 414–434; it reads SLITVSILAFTNLLVIFVPTI. The Extracellular segment spans residues 435–436; it reads RD. A helical transmembrane segment spans residues 437–457; it reads IFGFIGASAASMLIFILPSAF. Residues 458–472 lie on the Cytoplasmic side of the membrane; sequence YIKLVKKEPMKSVQK. A helical transmembrane segment spans residues 473-495; it reads IGALFFLLSGVLVMTGSMALIVL. At 496–506 the chain is on the extracellular side; sequence DWVHNAPGGGH.

It belongs to the amino acid/polyamine transporter 2 family. In terms of processing, polyubiquitination by NEDD4L regulates the degradation and the activity of SLC38A2.

Its subcellular location is the cell membrane. The enzyme catalyses L-alanine(in) + Na(+)(in) = L-alanine(out) + Na(+)(out). It catalyses the reaction glycine(in) + Na(+)(in) = glycine(out) + Na(+)(out). The catalysed reaction is L-serine(in) + Na(+)(in) = L-serine(out) + Na(+)(out). It carries out the reaction L-proline(in) + Na(+)(in) = L-proline(out) + Na(+)(out). The enzyme catalyses L-methionine(in) + Na(+)(in) = L-methionine(out) + Na(+)(out). It catalyses the reaction L-histidine(in) + Na(+)(in) = L-histidine(out) + Na(+)(out). The catalysed reaction is L-asparagine(in) + Na(+)(in) = L-asparagine(out) + Na(+)(out). It carries out the reaction L-glutamine(in) + Na(+)(in) = L-glutamine(out) + Na(+)(out). The enzyme catalyses L-threonine(in) + Na(+)(in) = L-threonine(out) + Na(+)(out). It catalyses the reaction L-leucine(in) + Na(+)(in) = L-leucine(out) + Na(+)(out). The catalysed reaction is L-phenylalanine(in) + Na(+)(in) = L-phenylalanine(out) + Na(+)(out). With respect to regulation, inhibited by N-methyl-D-glucamine. Inhibited by choline. Allosteric regulation of sodium ions binding by pH. Symporter that cotransports neutral amino acids and sodium ions from the extracellular to the intracellular side of the cell membrane. The transport is pH-sensitive, Li(+)-intolerant, electrogenic, driven by the Na(+) electrochemical gradient and cotransports of neutral amino acids and sodium ions with a stoichiometry of 1:1. May function in the transport of amino acids at the blood-brain barrier. May function in the transport of amino acids in the supply of maternal nutrients to the fetus through the placenta. Maintains a key metabolic glutamine/glutamate balance underpinning retrograde signaling by dendritic release of the neurotransmitter glutamate. Transports L-proline in differentiating osteoblasts for the efficient synthesis of proline-enriched proteins and provides proline essential for osteoblast differentiation and bone formation during bone development. This Pan paniscus (Pygmy chimpanzee) protein is Sodium-coupled neutral amino acid symporter 2.